The following is a 396-amino-acid chain: Ribosomal RNA large subunit methyltransferase I (396 aa).

In terms of domain architecture, PUA spans Ser-2–Arg-81.

The protein belongs to the methyltransferase superfamily. RlmI family.

Its subcellular location is the cytoplasm. It carries out the reaction cytidine(1962) in 23S rRNA + S-adenosyl-L-methionine = 5-methylcytidine(1962) in 23S rRNA + S-adenosyl-L-homocysteine + H(+). Functionally, specifically methylates the cytosine at position 1962 (m5C1962) of 23S rRNA. This is Ribosomal RNA large subunit methyltransferase I from Shigella flexneri serotype 5b (strain 8401).